A 211-amino-acid chain; its full sequence is Thymidylate kinase (211 aa).

10-17 (GPDGAGKT) lines the ATP pocket.

The protein belongs to the thymidylate kinase family.

It carries out the reaction dTMP + ATP = dTDP + ADP. Functionally, phosphorylation of dTMP to form dTDP in both de novo and salvage pathways of dTTP synthesis. The protein is Thymidylate kinase (tmk) of Lactococcus lactis subsp. lactis (strain IL1403) (Streptococcus lactis).